The chain runs to 405 residues: Protein NDRG4 (405 aa).

The segment at 352-405 is disordered; that stretch reads AGAVPSASMTRLARSRTASLTSASSVDGARPRPCTQSESSDGIGQINHTMEVSC. Low complexity predominate over residues 361–376; it reads TRLARSRTASLTSASS. The span at 385–405 shows a compositional bias: polar residues; it reads CTQSESSDGIGQINHTMEVSC.

The protein belongs to the NDRG family.

The protein localises to the cytoplasm. The protein resides in the cytosol. In terms of biological role, contributes to the maintenance of intracerebral BDNF levels within the normal range. May enhance growth factor-induced ERK1 and ERK2 phosphorylation. May attenuate growth factor-promoted ELK1 phosphorylation in a microtubule-dependent manner. This chain is Protein NDRG4, found in Xenopus tropicalis (Western clawed frog).